The chain runs to 616 residues: Dihydroxy-acid dehydratase (616 aa).

Mg(2+) is bound at residue Asp-81. Cys-122 contributes to the [2Fe-2S] cluster binding site. Positions 123 and 124 each coordinate Mg(2+). Lys-124 is modified (N6-carboxylysine). Cys-195 is a [2Fe-2S] cluster binding site. Glu-491 is a binding site for Mg(2+). The Proton acceptor role is filled by Ser-517.

The protein belongs to the IlvD/Edd family. In terms of assembly, homodimer. Requires [2Fe-2S] cluster as cofactor. Mg(2+) serves as cofactor.

It carries out the reaction (2R)-2,3-dihydroxy-3-methylbutanoate = 3-methyl-2-oxobutanoate + H2O. The catalysed reaction is (2R,3R)-2,3-dihydroxy-3-methylpentanoate = (S)-3-methyl-2-oxopentanoate + H2O. It participates in amino-acid biosynthesis; L-isoleucine biosynthesis; L-isoleucine from 2-oxobutanoate: step 3/4. Its pathway is amino-acid biosynthesis; L-valine biosynthesis; L-valine from pyruvate: step 3/4. Functions in the biosynthesis of branched-chain amino acids. Catalyzes the dehydration of (2R,3R)-2,3-dihydroxy-3-methylpentanoate (2,3-dihydroxy-3-methylvalerate) into 2-oxo-3-methylpentanoate (2-oxo-3-methylvalerate) and of (2R)-2,3-dihydroxy-3-methylbutanoate (2,3-dihydroxyisovalerate) into 2-oxo-3-methylbutanoate (2-oxoisovalerate), the penultimate precursor to L-isoleucine and L-valine, respectively. The sequence is that of Dihydroxy-acid dehydratase from Edwardsiella ictaluri (strain 93-146).